We begin with the raw amino-acid sequence, 210 residues long: ESCRT-III complex subunit did4 (210 aa).

A disordered region spans residues 1 to 38 (MGLTSWLFGGGKSPQEQLRAHQRSLGRAERELDRERTK). Positions 15–97 (QEQLRAHQRS…AISLRLQTMR (83 aa)) form a coiled coil. Residues 26–38 (GRAERELDRERTK) show a composition bias toward basic and acidic residues.

Belongs to the SNF7 family. Core component of the ESCRT-III complex (endosomal sorting required for transport complex III). ESCRT-III appears to be sequentially assembled as a flat lattice on the endosome membrane.

Its subcellular location is the cytoplasm. It localises to the endosome membrane. Functionally, required for the sorting and concentration of proteins resulting in the entry of these proteins into the invaginating vesicles of the multivesicular body (MVB). Acts a component of the ESCRT-III complex, which appears to be critical for late steps in MVB sorting, such as membrane invagination and final cargo sorting and recruitment of late-acting components of the sorting machinery. The MVB pathway requires the sequential function of ESCRT-O, -I,-II and -III complex assemblies. This Schizosaccharomyces pombe (strain 972 / ATCC 24843) (Fission yeast) protein is ESCRT-III complex subunit did4 (did4).